The primary structure comprises 73 residues: Kappa-scoloptoxin SsmTx-I (73 aa).

The first 25 residues, 1 to 25, serve as a signal peptide directing secretion; that stretch reads MMMMFSVVSVFLMLLLLKFHDLSMG. A propeptide spanning residues 26–37 is cleaved from the precursor; sequence EEISLLKKVVRR. Cystine bridges form between C45/C56 and C50/C63.

It belongs to the scoloptoxin-04 family. As to expression, expressed by the venom gland.

Its subcellular location is the secreted. In terms of biological role, exhibits highly specific blockage of Kv2.1/KCNB1 (IC(50)=41.7 nM) voltage-gated potassium channels. This blockage is not associated with a significant change in steady-state activation, suggesting that this toxin acts as a channel blocker rather than a gating-modifier. Shows potential analgesic activities in formalin-induced paw licking, thermal pain, and acetic acid-induced abdominal writhing mice models. The sequence is that of Kappa-scoloptoxin SsmTx-I from Scolopendra mutilans (Chinese red-headed centipede).